The chain runs to 513 residues: MTKLVNEMILVLDFGSQYNQLITRRIREFGVYSELHPHTLTAEEIKKMNPKGIILSGGPNSVYDEGSFRCDEKIFELDIPVLGICYGMQLMTHYLGGKVEAASQREYGKANIHIEGEPDLFKDLPNEQVVWMSHGDLVVEVPEGFTVDATSHHCPNSAMSKKDKKWYGVQFHPEVRHSEYGNDLLKNFVFGVCECVGEWSMENFIEIEMQKIRETVGDKQVLCALSGGVDSSVVAVLIHKAIGDQLTCIFVDHGLLRKGEAEGVMKTFSEGFNMNVIKVDAKDRFLNKLKGVSDPEQKRKIIGNEFIYVFDDEAEKLKGIDFLAQGTLYTDIIESGTATAQTIKSHHNVGGLPEDMQFELIEPLNTLFKDEVRALGTELGIPDEIVWRQPFPGPGLGIRVLGEVTEEKLEIVRESDAILREEIAKADLEKDIWQYFTVLPDIRSVGVMGDARTYDYTIGIRAVTSIDGMTSDWARIPWDVLEKISTRIVNEVKHINRVVYDITSKPPATIEWE.

Residues 8 to 198 enclose the Glutamine amidotransferase type-1 domain; that stretch reads MILVLDFGSQ…VFGVCECVGE (191 aa). The active-site Nucleophile is the Cys85. Catalysis depends on residues His172 and Glu174. One can recognise a GMPS ATP-PPase domain in the interval 199-388; it reads WSMENFIEIE…LGIPDEIVWR (190 aa). Residue 226–232 coordinates ATP; it reads SGGVDSS.

Homodimer.

The catalysed reaction is XMP + L-glutamine + ATP + H2O = GMP + L-glutamate + AMP + diphosphate + 2 H(+). Its pathway is purine metabolism; GMP biosynthesis; GMP from XMP (L-Gln route): step 1/1. Functionally, catalyzes the synthesis of GMP from XMP. The sequence is that of GMP synthase [glutamine-hydrolyzing] from Bacillus licheniformis (strain ATCC 14580 / DSM 13 / JCM 2505 / CCUG 7422 / NBRC 12200 / NCIMB 9375 / NCTC 10341 / NRRL NRS-1264 / Gibson 46).